Here is an 878-residue protein sequence, read N- to C-terminus: Phosphoenolpyruvate carboxylase (878 aa).

Catalysis depends on residues histidine 138 and lysine 545.

This sequence belongs to the PEPCase type 1 family. Mg(2+) is required as a cofactor.

The catalysed reaction is oxaloacetate + phosphate = phosphoenolpyruvate + hydrogencarbonate. Forms oxaloacetate, a four-carbon dicarboxylic acid source for the tricarboxylic acid cycle. The sequence is that of Phosphoenolpyruvate carboxylase from Shewanella halifaxensis (strain HAW-EB4).